A 113-amino-acid chain; its full sequence is Iron-sulfur cluster insertion protein ErpA (113 aa).

Residues cysteine 41, cysteine 105, and cysteine 107 each contribute to the iron-sulfur cluster site.

Belongs to the HesB/IscA family. As to quaternary structure, homodimer. Iron-sulfur cluster is required as a cofactor.

Required for insertion of 4Fe-4S clusters for at least IspG. This chain is Iron-sulfur cluster insertion protein ErpA, found in Mannheimia succiniciproducens (strain KCTC 0769BP / MBEL55E).